Reading from the N-terminus, the 240-residue chain is Transcriptional regulatory protein ChvI (240 aa).

In terms of domain architecture, Response regulatory spans 3-116; the sequence is TIALVDDDRN…LLVERVKAIL (114 aa). 3 residues coordinate Mg(2+): D8, D9, and D52. D52 is subject to 4-aspartylphosphate. Residues 139-238 constitute a DNA-binding region (ompR/PhoB-type); sequence SRSLERGQLV…LYGVGYRFRE (100 aa).

Requires Mg(2+) as cofactor. In terms of processing, phosphorylated by ChvG.

The protein localises to the cytoplasm. Its pathway is glycan metabolism; exopolysaccharide biosynthesis. Member of a two-component regulatory system ChvG(ExoS)/ChvI involved in regulating the production of succinoglycan. The sequence is that of Transcriptional regulatory protein ChvI (chvI) from Rhizobium meliloti (strain 1021) (Ensifer meliloti).